The sequence spans 476 residues: Proline--tRNA ligase 2 (476 aa).

The protein belongs to the class-II aminoacyl-tRNA synthetase family. ProS type 3 subfamily. Homodimer.

The protein localises to the cytoplasm. The enzyme catalyses tRNA(Pro) + L-proline + ATP = L-prolyl-tRNA(Pro) + AMP + diphosphate. Catalyzes the attachment of proline to tRNA(Pro) in a two-step reaction: proline is first activated by ATP to form Pro-AMP and then transferred to the acceptor end of tRNA(Pro). This Bacillus thuringiensis (strain Al Hakam) protein is Proline--tRNA ligase 2.